A 420-amino-acid chain; its full sequence is Tyrosine--tRNA ligase (420 aa).

Tyrosine 33 is a binding site for L-tyrosine. The 'HIGH' region motif lies at 38-47; it reads PTGPSLHAGH. Tyrosine 167 and glutamine 171 together coordinate L-tyrosine. A 'KMSKS' region motif is present at residues 227–231; it reads KFGKS. ATP is bound at residue lysine 230. Residues 352 to 418 form the S4 RNA-binding domain; that stretch reads RTIIDLLVAS…GKKNFAGVQI (67 aa).

It belongs to the class-I aminoacyl-tRNA synthetase family. TyrS type 1 subfamily. In terms of assembly, homodimer.

It is found in the cytoplasm. The catalysed reaction is tRNA(Tyr) + L-tyrosine + ATP = L-tyrosyl-tRNA(Tyr) + AMP + diphosphate + H(+). Functionally, catalyzes the attachment of tyrosine to tRNA(Tyr) in a two-step reaction: tyrosine is first activated by ATP to form Tyr-AMP and then transferred to the acceptor end of tRNA(Tyr). The sequence is that of Tyrosine--tRNA ligase from Corynebacterium glutamicum (strain ATCC 13032 / DSM 20300 / JCM 1318 / BCRC 11384 / CCUG 27702 / LMG 3730 / NBRC 12168 / NCIMB 10025 / NRRL B-2784 / 534).